A 491-amino-acid chain; its full sequence is Probable polygalacturonase (491 aa).

Residues 15–35 traverse the membrane as a helical segment; it reads PIVSFYCFQVVSVLVAVVLLL. 3 N-linked (GlcNAc...) asparagine glycosylation sites follow: Asn-165, Asn-175, and Asn-214. PbH1 repeat units lie at residues 230–256, 257–278, 319–340, and 348–369; these read SRNILIQGITILAPVRSPNTDGINPDS, CTNTRIEDCYIVSGDDCVAVKS, IQDVRAEDIVAINSESGIRIKT, and VKDIYVRGMTMKTMKWAFWMTG. The active-site Proton donor is Asp-271. 2 N-linked (GlcNAc...) asparagine glycosylation sites follow: Asn-399 and Asn-421.

Belongs to the glycosyl hydrolase 28 family.

The protein resides in the membrane. It catalyses the reaction (1,4-alpha-D-galacturonosyl)n+m + H2O = (1,4-alpha-D-galacturonosyl)n + (1,4-alpha-D-galacturonosyl)m.. This chain is Probable polygalacturonase, found in Vitis vinifera (Grape).